Here is a 110-residue protein sequence, read N- to C-terminus: Small ribosomal subunit protein uS10 (110 aa).

It belongs to the universal ribosomal protein uS10 family. Part of the 30S ribosomal subunit.

Functionally, involved in the binding of tRNA to the ribosomes. This chain is Small ribosomal subunit protein uS10, found in Ehrlichia ruminantium (strain Gardel).